We begin with the raw amino-acid sequence, 142 residues long: Maximins y/Hv type 1 (142 aa).

The N-terminal stretch at 1–18 is a signal peptide; it reads MNFKYIVAVSFLIASGYA. The propeptide occupies 19-43; sequence RSEENDVQSLSQREVLEEESLREIR. A Phenylalanine amide modification is found at phenylalanine 68. A propeptide spanning residues 72–121 is cleaved from the precursor; sequence TAEDHEVMKRLEAVMRDLDSLDHPEEASERETRGFNQEEIANLFTKKEKR. An Isoleucine amide modification is found at isoleucine 141.

The protein belongs to the bombinin family. As to expression, expressed by the skin glands.

Its subcellular location is the secreted. Maximin-y shows antimicrobial activity against bacteria and against the fungus C.albicans. It has little hemolytic activity. In terms of biological role, maximin-Hv shows antimicrobial activity against bacteria and against the fungus C.albicans. Shows strong hemolytic activity. In Bombina maxima (Giant fire-bellied toad), this protein is Maximins y/Hv type 1.